A 352-amino-acid chain; its full sequence is Protein RecA (352 aa).

Position 64-71 (glycine 64–threonine 71) interacts with ATP. The disordered stretch occupies residues asparagine 328–glutamate 352. Residues alanine 335–glutamate 352 show a composition bias toward acidic residues.

The protein belongs to the RecA family.

The protein localises to the cytoplasm. In terms of biological role, can catalyze the hydrolysis of ATP in the presence of single-stranded DNA, the ATP-dependent uptake of single-stranded DNA by duplex DNA, and the ATP-dependent hybridization of homologous single-stranded DNAs. It interacts with LexA causing its activation and leading to its autocatalytic cleavage. This is Protein RecA from Brevibacillus brevis (strain 47 / JCM 6285 / NBRC 100599).